The sequence spans 64 residues: Large ribosomal subunit protein bL28 (64 aa).

The protein belongs to the bacterial ribosomal protein bL28 family.

The chain is Large ribosomal subunit protein bL28 from Elusimicrobium minutum (strain Pei191).